The following is a 1204-amino-acid chain: Erythroid differentiation-related factor 1 (1204 aa).

4 disordered regions span residues 1–30, 220–264, 483–527, and 586–613; these read MGDA…QAES, QPVS…ASSQ, PKKE…SDDS, and KKES…RGGP. 3 stretches are compositionally biased toward low complexity: residues 9–30, 223–241, and 253–263; these read AEGP…QAES, SSTT…NDSE, and SSVSEDPSASS. The segment covering 496 to 513 has biased composition (acidic residues); the sequence is NSDESYSEEEEEMPDSDE. 2 TPR repeats span residues 693–726 and 920–953; these read CCLC…QNAN and DIHP…LSRK.

Its subcellular location is the nucleus. Transcription factor involved in erythroid differentiation. Involved in transcriptional activation of the globin gene. This is Erythroid differentiation-related factor 1 (EDRF1) from Pongo abelii (Sumatran orangutan).